The following is a 455-amino-acid chain: Outer capsid protein sigma-1 (455 aa).

Positions 1–307 are tail; that stretch reads MDPRLREEVV…YPIADVSGGI (307 aa). Positions 116 to 148 form a coiled coil; that stretch reads LAELRVDHDNLVARVDTAERNIGSLTTELSTLT. 3 N-linked (GlcNAc...) asparagine; by host glycosylation sites follow: Asn231, Asn264, and Asn282. The head stretch occupies residues 308–455; that stretch reads GMSPNYRFRQ…MTVSYPRSFT (148 aa).

This sequence belongs to the orthoreovirus sigma-1 protein family. As to quaternary structure, homotrimer. Interacts (via the head region) with human F11R. Post-translationally, undergoes dramatic conformational rearrangements during viral disassembly in the endocytic pathway.

The protein localises to the virion. Fiber-like molecule that attaches the virion to the host cell membrane by binding to the primary receptor F11R/JAM-A and to sialic acid containing proteins (coreceptor). The interaction of sigma-1 with F11R is required for NF-kB activation and apoptosis. Binding to both sialic acid and F11R is required to induce maximal levels of apoptosis. This is Outer capsid protein sigma-1 (S1) from Reovirus type 3 (strain Dearing) (T3D).